The following is a 345-amino-acid chain: Phosphoribosylformylglycinamidine cyclo-ligase (345 aa).

It belongs to the AIR synthase family.

It localises to the cytoplasm. The catalysed reaction is 2-formamido-N(1)-(5-O-phospho-beta-D-ribosyl)acetamidine + ATP = 5-amino-1-(5-phospho-beta-D-ribosyl)imidazole + ADP + phosphate + H(+). Its pathway is purine metabolism; IMP biosynthesis via de novo pathway; 5-amino-1-(5-phospho-D-ribosyl)imidazole from N(2)-formyl-N(1)-(5-phospho-D-ribosyl)glycinamide: step 2/2. The polypeptide is Phosphoribosylformylglycinamidine cyclo-ligase (Staphylococcus carnosus (strain TM300)).